The following is a 211-amino-acid chain: NADH-quinone oxidoreductase subunit I 1 (211 aa).

2 4Fe-4S ferredoxin-type domains span residues 50-80 (LNRH…VEGA) and 96-125 (RVYQ…MTNE). Residues Cys-60, Cys-63, Cys-66, Cys-70, Cys-105, Cys-108, Cys-111, and Cys-115 each coordinate [4Fe-4S] cluster. The segment at 192 to 211 (QEGDSTFGATEPASEEVIRR) is disordered.

This sequence belongs to the complex I 23 kDa subunit family. NDH-1 is composed of 14 different subunits. Subunits NuoA, H, J, K, L, M, N constitute the membrane sector of the complex. It depends on [4Fe-4S] cluster as a cofactor.

It localises to the cell membrane. It catalyses the reaction a quinone + NADH + 5 H(+)(in) = a quinol + NAD(+) + 4 H(+)(out). Functionally, NDH-1 shuttles electrons from NADH, via FMN and iron-sulfur (Fe-S) centers, to quinones in the respiratory chain. The immediate electron acceptor for the enzyme in this species is believed to be ubiquinone. Couples the redox reaction to proton translocation (for every two electrons transferred, four hydrogen ions are translocated across the cytoplasmic membrane), and thus conserves the redox energy in a proton gradient. This chain is NADH-quinone oxidoreductase subunit I 1, found in Streptomyces coelicolor (strain ATCC BAA-471 / A3(2) / M145).